A 106-amino-acid polypeptide reads, in one-letter code: ATP-dependent Clp protease adapter protein ClpS (106 aa).

This sequence belongs to the ClpS family. Binds to the N-terminal domain of the chaperone ClpA.

Its function is as follows. Involved in the modulation of the specificity of the ClpAP-mediated ATP-dependent protein degradation. The chain is ATP-dependent Clp protease adapter protein ClpS from Escherichia coli O127:H6 (strain E2348/69 / EPEC).